We begin with the raw amino-acid sequence, 27 residues long: Pregnancy-associated glycoprotein 59 (27 aa).

The protein belongs to the peptidase A1 family. Glycosylated. Placenta.

This chain is Pregnancy-associated glycoprotein 59 (PAG59), found in Capra hircus (Goat).